The following is a 110-amino-acid chain: UPF0339 protein PA0329 (110 aa).

2 consecutive repeat copies span residues 10-58 (AKDG…AFEV) and 61-109 (ANNG…LSDE). Residues 91–110 (EAGVQSVKRATPEAGLSDES) form a disordered region.

The protein belongs to the UPF0339 family. Duplicated subfamily.

The chain is UPF0339 protein PA0329 from Pseudomonas aeruginosa (strain ATCC 15692 / DSM 22644 / CIP 104116 / JCM 14847 / LMG 12228 / 1C / PRS 101 / PAO1).